The chain runs to 127 residues: Large ribosomal subunit protein eL8 (127 aa).

This sequence belongs to the eukaryotic ribosomal protein eL8 family. Part of the 50S ribosomal subunit. Probably part of the RNase P complex.

Its subcellular location is the cytoplasm. Functionally, multifunctional RNA-binding protein that recognizes the K-turn motif in ribosomal RNA, the RNA component of RNase P, box H/ACA, box C/D and box C'/D' sRNAs. This chain is Large ribosomal subunit protein eL8, found in Aeropyrum pernix (strain ATCC 700893 / DSM 11879 / JCM 9820 / NBRC 100138 / K1).